The following is a 228-amino-acid chain: Triosephosphate isomerase (228 aa).

9 to 11 (NFK) provides a ligand contact to substrate. Histidine 93 serves as the catalytic Electrophile. Glutamate 141 serves as the catalytic Proton acceptor. Substrate is bound by residues isoleucine 146, glycine 180, and 201 to 202 (AS).

This sequence belongs to the triosephosphate isomerase family. As to quaternary structure, homotetramer; dimer of dimers.

Its subcellular location is the cytoplasm. The enzyme catalyses D-glyceraldehyde 3-phosphate = dihydroxyacetone phosphate. Its pathway is carbohydrate biosynthesis; gluconeogenesis. It participates in carbohydrate degradation; glycolysis; D-glyceraldehyde 3-phosphate from glycerone phosphate: step 1/1. Its function is as follows. Involved in the gluconeogenesis. Catalyzes stereospecifically the conversion of dihydroxyacetone phosphate (DHAP) to D-glyceraldehyde-3-phosphate (G3P). This is Triosephosphate isomerase from Metallosphaera sedula (strain ATCC 51363 / DSM 5348 / JCM 9185 / NBRC 15509 / TH2).